Consider the following 374-residue polypeptide: MPHKVSLSRLKLTDFRNYAAAALALDGRHAVLTGDNGAGKTNLMEAVSLLSPGRGLRRAAYGDITRVGAAGGFSIFAALDGMEGDVEIGTGIETGEETTARKLRINGTTAKTADELTDHLRLLWLTPAMDGLFTGASSDRRRFLDRLVLSLDPAHGRRASDFERAMRSRNKLLDEGRFDPSWLAGIEEQMASLGIAMALARQEMLGLLTRLIEETRETSPFPSASLQLSGFMDGQFSRPSVDLEDDYAAMLAESRYRDAGAGRTLEGPHRADLIVHHREKAMEAERCSTGEQKALLVGLVLAHARLVGNLTGHAPILLLDEIAAHLDEGRRAALFDLIDGLGGQAFMTGTDRAMFSALGDKAQFFTVADGRVFE.

Residue 34–41 coordinates ATP; the sequence is GDNGAGKT.

The protein belongs to the RecF family.

The protein localises to the cytoplasm. The RecF protein is involved in DNA metabolism; it is required for DNA replication and normal SOS inducibility. RecF binds preferentially to single-stranded, linear DNA. It also seems to bind ATP. The polypeptide is DNA replication and repair protein RecF (Rhizobium johnstonii (strain DSM 114642 / LMG 32736 / 3841) (Rhizobium leguminosarum bv. viciae)).